The primary structure comprises 262 residues: DNA repair protein RecO (262 aa).

It belongs to the RecO family.

Functionally, involved in DNA repair and RecF pathway recombination. The polypeptide is DNA repair protein RecO (Acidovorax ebreus (strain TPSY) (Diaphorobacter sp. (strain TPSY))).